Consider the following 78-residue polypeptide: Acyl carrier protein (78 aa).

The Carrier domain occupies 2–77 (SDIAERVKKI…DAVKFIEKAQ (76 aa)). Ser-37 is modified (O-(pantetheine 4'-phosphoryl)serine).

It belongs to the acyl carrier protein (ACP) family. In terms of processing, 4'-phosphopantetheine is transferred from CoA to a specific serine of apo-ACP by AcpS. This modification is essential for activity because fatty acids are bound in thioester linkage to the sulfhydryl of the prosthetic group.

Its subcellular location is the cytoplasm. Its pathway is lipid metabolism; fatty acid biosynthesis. Functionally, carrier of the growing fatty acid chain in fatty acid biosynthesis. This chain is Acyl carrier protein, found in Rhizobium etli (strain CIAT 652).